Reading from the N-terminus, the 434-residue chain is Polyadenylate-binding protein RBP47C' (434 aa).

Positions 1 to 50 are disordered; the sequence is MADVKVQSESESSDSHPLVDYQSLPPYPPPHPPVEVEENQPKTSPTPPPP. 3 consecutive RRM domains span residues 103 to 185, 199 to 278, and 306 to 378; these read KTIW…WASF, LSIF…PATP, and TTIF…WGRN.

Belongs to the polyadenylate-binding RBP47 family. Interacts with the poly(A) tail of mRNA in nucleus.

It is found in the nucleus. The protein localises to the cytoplasmic granule. In terms of biological role, heterogeneous nuclear ribonucleoprotein (hnRNP)-protein binding the poly(A) tail of mRNA and probably involved in some steps of pre-mRNA maturation. This chain is Polyadenylate-binding protein RBP47C' (RBP47C'), found in Arabidopsis thaliana (Mouse-ear cress).